We begin with the raw amino-acid sequence, 1307 residues long: Histone-lysine N-methyltransferase SETDB1 (1307 aa).

Positions 30 to 65 (VEELGISMEELRQYIDEELEKMDCIQQRKKQLAELE) form a coiled coil. Phosphoserine occurs at positions 112 and 117. Thr120 is modified (phosphothreonine). The disordered stretch occupies residues 127–148 (DEDDDVLSIDSGDAGSRTPKDQ). A Glycyl lysine isopeptide (Lys-Gly) (interchain with G-Cter in SUMO2); alternate cross-link involves residue Lys182. A Glycyl lysine isopeptide (Lys-Gly) (interchain with G-Cter in ubiquitin); alternate cross-link involves residue Lys182. 2 Tudor domains span residues 257–320 (KLFV…LKKT) and 347–403 (LLKS…SMKT). 3 disordered regions span residues 404–424 (SSAS…PNMG), 444–512 (IQFK…TLSE), and 531–570 (SVTS…AFHG). Positions 454-467 (PIAPPAPLPIPPLS) are enriched in pro residues. A compositionally biased stretch (polar residues) spans 476-494 (ESQLAQSRKQVAKKSTSFR). Residues 495 to 512 (PGSVGSGHSSPTSSTLSE) show a composition bias toward low complexity. A compositionally biased stretch (pro residues) spans 539–565 (AAPPVPPVPPGPPTPPGPPAPPGPLAP). The MBD domain maps to 611–682 (YRGKNPLLVP…EMFCLDPYVL (72 aa)). The region spanning 744-817 (VGCDCKDGCR…MCTNRLVQHG (74 aa)) is the Pre-SET domain. The Zn(2+) site is built by Cys746, Cys748, Cys752, Cys758, Cys760, Cys798, Cys802, Cys804, and Cys809. One can recognise an SET domain in the interval 820 to 1282 (VRLQLFKTQN…AGTELTWDYN (463 aa)). Residues 830–832 (KGW), Asp868, and Tyr870 each bind S-adenosyl-L-methionine. Lys884 participates in a covalent cross-link: Glycyl lysine isopeptide (Lys-Gly) (interchain with G-Cter in ubiquitin). Residues 885 to 1174 (EGYESDVPTS…KNLSGPTKRQ (290 aa)) form a disordered region. Residues 913 to 924 (EDPEESNDDSSD) show a composition bias toward acidic residues. The span at 950-966 (GQKENELSEMTSKDSRP) shows a compositional bias: basic and acidic residues. At Ser1042 the chain carries Phosphoserine. The span at 1048–1066 (FKDEGDNKQPKKEDPENRN) shows a compositional bias: basic and acidic residues. Lys1049 is covalently cross-linked (Glycyl lysine isopeptide (Lys-Gly) (interchain with G-Cter in SUMO2); alternate). Lys1049 is covalently cross-linked (Glycyl lysine isopeptide (Lys-Gly) (interchain with G-Cter in SUMO1); alternate). Residues Lys1055 and Lys1085 each participate in a glycyl lysine isopeptide (Lys-Gly) (interchain with G-Cter in SUMO2) cross-link. Residues 1097–1112 (SVLQSQRVVTSTQSNP) are compositionally biased toward polar residues. The segment covering 1116–1131 (LTLSSSTESEGESGTS) has biased composition (low complexity). A compositionally biased stretch (polar residues) spans 1137-1156 (GHTSATAVDSDDIQTISSGS). Lys1165 participates in a covalent cross-link: Glycyl lysine isopeptide (Lys-Gly) (interchain with G-Cter in SUMO2). Residues Lys1186 and Lys1194 each carry the N6,N6,N6-trimethyllysine; alternate modification. N6,N6-dimethyllysine; alternate is present on residues Lys1186 and Lys1194. S-adenosyl-L-methionine contacts are provided by residues Arg1236 and 1239–1240 (NH). Zn(2+) is bound by residues Cys1242, Cys1295, Cys1297, and Cys1302. The Post-SET domain occupies 1291 to 1307 (KELLCCCGAIECRGRLL).

The protein belongs to the class V-like SAM-binding methyltransferase superfamily. Histone-lysine methyltransferase family. Suvar3-9 subfamily. In terms of assembly, part of a complex containing at least CDYL, REST, WIZ, SETDB1, EHMT1 and EHMT2. Forms a complex with ATRX, TRIM28 and ZNF274. Probably part of a corepressor complex containing ZNF304, TRIM28, SETDB1 and DNMT1. Interacts with TRIM28/TIF1B. Interacts with ATF7IP and ATF7IP2; the interaction with ATF7IP is required to stimulate histone methyltransferase activity and facilitate the conversion of dimethylated to trimethylated H3 'Lys-9'. Interacts with MBD1; interaction is abolished when MBD1 is sumoylated. Interacts with CBX1 and CBX5. Interacts with DNMT3A and DNMT3B. Interacts with SUMO2. Interacts with MPHOSPH8. Interacts with ERG. Interacts with HDAC1, HDAC2, SIN3A, SIN3B. Interacts with ATRX. Interacts with RESF1. Interacts with ZNF638. Interacts with TASOR. Interacts with ZNF263; recruited to the SIX3 promoter along with other proteins involved in chromatin modification and transcriptional corepression where it contributes to transcriptional repression. Interacts with PHF13; the interaction probably enhances SETDB1 chromatin-associated levels and activity. Interacts with VRK1. In terms of processing, degraded by the proteasome, shielded by interaction with ATF7IP. Post-translationally, monoubiquitinated at Lys-884 by E2 enzymes UBE2E family. The conjugated-Ub is protected from deubiquitination through the SET domain. Monoubiquitination at Lys-884 is required for catalytic activity and H3K9 methylation and endogenous retrovirus silencing. In terms of tissue distribution, ubiquitously expressed. Strong expression in liver and testis. Expressed in the brain, lungs, kidneys, uterus and seminal vesicles.

The protein resides in the nucleus. It is found in the chromosome. It catalyses the reaction N(6),N(6)-dimethyl-L-lysyl(9)-[histone H3] + S-adenosyl-L-methionine = N(6),N(6),N(6)-trimethyl-L-lysyl(9)-[histone H3] + S-adenosyl-L-homocysteine + H(+). Its function is as follows. Histone methyltransferase that specifically trimethylates 'Lys-9' of histone H3. H3 'Lys-9' trimethylation represents a specific tag for epigenetic transcriptional repression by recruiting HP1 (CBX1, CBX3 and/or CBX5) proteins to methylated histones. Mainly functions in euchromatin regions, thereby playing a central role in the silencing of euchromatic genes. H3 'Lys-9' trimethylation is coordinated with DNA methylation. Probably forms a complex with MBD1 and ATF7IP that represses transcription and couples DNA methylation and histone 'Lys-9' trimethylation. Its activity is dependent on MBD1 and is heritably maintained through DNA replication by being recruited by CAF-1. SETDB1 is targeted to histone H3 by TRIM28/TIF1B, a factor recruited by KRAB zinc-finger proteins. Probably forms a corepressor complex required for activated KRAS-mediated promoter hypermethylation and transcriptional silencing of tumor suppressor genes (TSGs) or other tumor-related genes in colorectal cancer (CRC) cells. Required to maintain a transcriptionally repressive state of genes in undifferentiated embryonic stem cells (ESCs). In ESCs, in collaboration with TRIM28, is also required for H3K9me3 and silencing of endogenous and introduced retroviruses in a DNA-methylation independent-pathway. Associates at promoter regions of tumor suppressor genes (TSGs) leading to their gene silencing. The SETDB1-TRIM28-ZNF274 complex may play a role in recruiting ATRX to the 3'-exons of zinc-finger coding genes with atypical chromatin signatures to establish or maintain/protect H3K9me3 at these transcriptionally active regions. The protein is Histone-lysine N-methyltransferase SETDB1 of Mus musculus (Mouse).